The chain runs to 497 residues: L-asparagine permease (497 aa).

The next 12 membrane-spanning stretches (helical) occupy residues 34–54 (QVQMIAIGGAIGTGLFLGAGA), 58–78 (MAGPALALVYLICGIFSFFIL), 109–129 (VAGWMYFINWAMTGIVDITAV), 146–166 (VFALGALTIVGTMNMIGVKWF), 171–191 (FWFALIKVLAIVIFLVVGTIF), 219–239 (LLPALVLIQGVVFAFASIELV), 264–284 (IGLFYVGSVVLLVLLLPWNAY), 298–318 (LGVPYIGSIMNIVVLTAALSS), 353–373 (YAGILATLVVYVVGVFLNYLV), 378–398 (FEIVLNFASLGIIASWAFIMV), 422–442 (APFTSWLTLLFLLSVLVLMAF), and 448–468 (TYTIASLPLIAILLVAGWFGV).

This sequence belongs to the amino acid-polyamine-organocation (APC) superfamily. Amino acid transporter (AAT) (TC 2.A.3.1) family.

The protein resides in the cell inner membrane. The protein is L-asparagine permease (ansP) of Salmonella typhimurium (strain LT2 / SGSC1412 / ATCC 700720).